Reading from the N-terminus, the 198-residue chain is Probable minor pilin MMP0709 (198 aa).

A propeptide spanning residues 1 to 5 (MSNRG) is cleaved from the precursor. The short motif at 6–14 (QLSIEMVIL) is the QXSXEXXXL element.

In terms of processing, the N-terminus is probably cleaved by the prepilin peptidase EppA, which recognizes the class III signal sequence.

The protein localises to the secreted. It localises to the cell surface. The protein resides in the fimbrium. In Methanococcus maripaludis (strain DSM 14266 / JCM 13030 / NBRC 101832 / S2 / LL), this protein is Probable minor pilin MMP0709.